A 984-amino-acid polypeptide reads, in one-letter code: E3 ubiquitin-protein ligase BRE1A (984 aa).

Positions 1–34 are disordered; sequence MSGAGNKRAAGEPGPSAPPEKKAGVEDSGTTVET. Residues 43–90 are a coiled coil; that stretch reads TEELDIRTLQTKNRKLAEMLDQRQAIEDELREHIEKLERRQATDDASL. The tract at residues 128–150 is disordered; it reads VVPEPEPDSDSNQERKDERERGE. The span at 139–150 shows a compositional bias: basic and acidic residues; it reads NQERKDERERGE. Coiled-coil stretches lie at residues 236 to 378 and 429 to 907; these read ADTL…VKET and SLHK…TTKK. Positions 506 to 632 are disordered; the sequence is SDLSKIRSRS…KHEDGRKKEA (127 aa). The segment covering 514–526 has biased composition (polar residues); that stretch reads RSGSALLQSQSST. 2 stretches are compositionally biased toward basic and acidic residues: residues 527 to 540 and 558 to 632; these read EDTK…KQEP and SEVK…KKEA. The segment at 931 to 970 adopts an RING-type zinc-finger fold; the sequence is CPCCNMRKKDAVLTKCFHVFCFECVKTRYDTRQRKCPKCN.

The protein belongs to the BRE1 family. As to quaternary structure, component of the RNF20/40 complex (also known as BRE1 complex).

It is found in the nucleus. The enzyme catalyses S-ubiquitinyl-[E2 ubiquitin-conjugating enzyme]-L-cysteine + [acceptor protein]-L-lysine = [E2 ubiquitin-conjugating enzyme]-L-cysteine + N(6)-ubiquitinyl-[acceptor protein]-L-lysine.. It participates in protein modification; protein ubiquitination. In terms of biological role, component of the RNF20/40 E3 ubiquitin-protein ligase complex that mediates monoubiquitination of 'Lys-120' of histone H2B (H2BK120ub1). H2BK120ub1 gives a specific tag for epigenetic transcriptional activation and is also prerequisite for histone H3 'Lys-4' and 'Lys-79' methylation (H3K4me and H3K79me, respectively). This chain is E3 ubiquitin-protein ligase BRE1A (RNF20), found in Gallus gallus (Chicken).